A 148-amino-acid polypeptide reads, in one-letter code: MVSTATFFFFVYLTLFVVIGFFSSLFIIPLLGISFVFAIGVVSFGFCSNMSFKMAQLIYVRADAFLKKVLDKMALQTQPAQLQEPQEPLSTLRPVSNPTIPSPLRQTARPSKFVTEEDVIFEPVSAQSAIARSLETTANKAGNKFQLS.

At 1–7 (MVSTATF) the chain is on the cytoplasmic side. Residues 8 to 28 (FFFVYLTLFVVIGFFSSLFII) traverse the membrane as a helical segment. Proline 29 is a topological domain (lumenal). A helical membrane pass occupies residues 30 to 50 (LLGISFVFAIGVVSFGFCSNM). Topologically, residues 51–148 (SFKMAQLIYV…NKAGNKFQLS (98 aa)) are cytoplasmic. Positions 83 to 110 (QEPQEPLSTLRPVSNPTIPSPLRQTARP) are disordered. A compositionally biased stretch (polar residues) spans 93 to 109 (RPVSNPTIPSPLRQTAR). At serine 102 the chain carries Phosphoserine.

The protein belongs to the OSW5 family. Interacts specifically with the seipin complex FLD1-LDB16. Only a fraction appears to associate with the seipin core components, suggesting that it may be an ancillary subunit of the complex. Found to interact with many mitochondrial and peroxisomal proteins.

It localises to the endoplasmic reticulum membrane. Its subcellular location is the lipid droplet. Functionally, involved in lipid droplet (LD) organization. Functions primarily upon nutrient depletion, facilitating LD consumption by lipophagy. Required for correct LD distribution during entry into stationary phase, where LDs accumulate at nucleus-vacuole junction (NVJ) contact sites. Involved in membrane interaction in a manner similar to those of SNARE proteins, binding to partners present in mitochondria or peroxisomes. Its partner on the mitochondrion side might be TOM22, a mitochondrial outer membrane protein, linking lipid droplets and mitochondria by protein-protein interaction. Involved in spore wall assembly. The protein is Lipid droplet organization protein LDO16 of Saccharomyces cerevisiae (strain ATCC 204508 / S288c) (Baker's yeast).